Consider the following 154-residue polypeptide: 3-hydroxyacyl-[acyl-carrier-protein] dehydratase FabZ (154 aa).

The active site involves His60.

The protein belongs to the thioester dehydratase family. FabZ subfamily.

Its subcellular location is the cytoplasm. The catalysed reaction is a (3R)-hydroxyacyl-[ACP] = a (2E)-enoyl-[ACP] + H2O. Its function is as follows. Involved in unsaturated fatty acids biosynthesis. Catalyzes the dehydration of short chain beta-hydroxyacyl-ACPs and long chain saturated and unsaturated beta-hydroxyacyl-ACPs. The sequence is that of 3-hydroxyacyl-[acyl-carrier-protein] dehydratase FabZ from Synechococcus sp. (strain CC9311).